The primary structure comprises 347 residues: Rhodopsin (347 aa).

At 1 to 33 the chain is on the extracellular side; sequence TEGPDFYIPMVNTTGVVRSPYEYPQYYLVNPAA. Asparagine 12 carries N-linked (GlcNAc...) asparagine glycosylation. Residues 34–58 form a helical membrane-spanning segment; that stretch reads YAVLGAYMFFLIIVGFPINFLTLYV. Residues 59-70 lie on the Cytoplasmic side of the membrane; sequence TLEHKKLRTPLN. A helical membrane pass occupies residues 71 to 93; that stretch reads YILLNLAVADLFMVIGGFTTTMY. Over 94-107 the chain is Extracellular; the sequence is SSMHGYFVLGRLGC. Cysteines 107 and 184 form a disulfide. A helical membrane pass occupies residues 108–130; it reads NIEGFFATLGGMISLWSLAVLAI. The 'Ionic lock' involved in activated form stabilization signature appears at 131-133; the sequence is ERW. Topologically, residues 131–149 are cytoplasmic; sequence ERWVVVCKPISNFRFGENH. The chain crosses the membrane as a helical span at residues 150–170; it reads AIMGVSLTWVMALACTVPPLV. The Extracellular segment spans residues 171-199; it reads GWSRYIPEGMQCACGIDYYTRAEGYNNES. Residue asparagine 197 is glycosylated (N-linked (GlcNAc...) asparagine). A helical membrane pass occupies residues 200-221; that stretch reads FVIYMFTFHFLFPMFIIFFCYG. The Cytoplasmic portion of the chain corresponds to 222–249; that stretch reads RLLCAVKEAAAAQQESETTQRAEREVTR. The helical transmembrane segment at 250–271 threads the bilayer; the sequence is MVILMVIGYLVCWLPYASVAWF. At 272 to 283 the chain is on the extracellular side; it reads IFTHKGSEFGPL. The chain crosses the membrane as a helical span at residues 284–305; that stretch reads FMAVPSFFAKSSSIYNPIIYIC. Lysine 293 is subject to N6-(retinylidene)lysine. Over 306-347 the chain is Cytoplasmic; the sequence is MNKQFRQCMITTLFCGKNPFEGQEEDSSTKTEASSASSVSPA. The S-palmitoyl cysteine moiety is linked to residue cysteine 320. Residues 326-347 form a disordered region; sequence EGQEEDSSTKTEASSASSVSPA. A compositionally biased stretch (low complexity) spans 335–347; it reads KTEASSASSVSPA.

Belongs to the G-protein coupled receptor 1 family. Opsin subfamily. Phosphorylated on some or all of the serine and threonine residues present in the C-terminal region. Post-translationally, contains one covalently linked retinal chromophore.

It localises to the membrane. The protein resides in the cell projection. Its subcellular location is the cilium. The protein localises to the photoreceptor outer segment. Its function is as follows. Photoreceptor required for image-forming vision at low light intensity. While most salt water fish species use retinal as chromophore, most freshwater fish use 3-dehydroretinal, or a mixture of retinal and 3-dehydroretinal. Light-induced isomerization of 11-cis to all-trans retinal triggers a conformational change that activates signaling via G-proteins. Subsequent receptor phosphorylation mediates displacement of the bound G-protein alpha subunit by arrestin and terminates signaling. The chain is Rhodopsin (rho) from Sargocentron spiniferum (Sabre squirrelfish).